The primary structure comprises 451 residues: Alpha-galactosidase (451 aa).

Position 5 to 71 (5 to 71) interacts with NAD(+); it reads PKITFIGAGS…ASGRITCHTN (67 aa). Asparagine 151 serves as a coordination point for substrate. Cysteine 173 contributes to the Mn(2+) binding site. The active-site Proton donor is histidine 174. Histidine 203 provides a ligand contact to Mn(2+). Arginine 287 is a binding site for substrate.

The protein belongs to the glycosyl hydrolase 4 family. As to quaternary structure, homodimer. The cofactor is Mn(2+). It depends on NAD(+) as a cofactor.

It carries out the reaction Hydrolysis of terminal, non-reducing alpha-D-galactose residues in alpha-D-galactosides, including galactose oligosaccharides, galactomannans and galactolipids.. The chain is Alpha-galactosidase (melA) from Salmonella typhimurium (strain LT2 / SGSC1412 / ATCC 700720).